Consider the following 546-residue polypeptide: Oncoprotein-induced transcript 3 protein (546 aa).

An N-terminal signal peptide occupies residues 1–19 (MPLSLLLTCLSTTVTLVSP). Residues Asn-89 and Asn-116 are each glycosylated (N-linked (GlcNAc...) asparagine). Residues 182-222 (DENECEHNNGGCSEICVNLKNSHRCACGVGRVLRSDGKTCE) enclose the EGF-like; calcium-binding domain. Intrachain disulfides connect Cys-186-Cys-197, Cys-193-Cys-206, and Cys-208-Cys-221. The region spanning 261–516 (TCQVPVLCKS…SRCAQGCHRR (256 aa)) is the ZP domain. A glycan (N-linked (GlcNAc...) asparagine) is linked at Asn-299.

In terms of tissue distribution, liver-specific. Expressed only in the hepatocytes.

It localises to the nucleus envelope. Its function is as follows. May be involved in hepatocellular function and development. This Mus musculus (Mouse) protein is Oncoprotein-induced transcript 3 protein (Oit3).